Consider the following 138-residue polypeptide: Large ribosomal subunit protein uL16 (138 aa).

Positions 1-19 (MLIPRRVKHRKQHHPKRSG) are enriched in basic residues. The disordered stretch occupies residues 1 to 24 (MLIPRRVKHRKQHHPKRSGAAKGG).

Belongs to the universal ribosomal protein uL16 family. As to quaternary structure, part of the 50S ribosomal subunit.

Its function is as follows. Binds 23S rRNA and is also seen to make contacts with the A and possibly P site tRNAs. The polypeptide is Large ribosomal subunit protein uL16 (Micrococcus luteus (strain ATCC 4698 / DSM 20030 / JCM 1464 / CCM 169 / CCUG 5858 / IAM 1056 / NBRC 3333 / NCIMB 9278 / NCTC 2665 / VKM Ac-2230) (Micrococcus lysodeikticus)).